The primary structure comprises 546 residues: CTP synthase (546 aa).

Positions 1-266 (MTTNYIFVTG…DDLVCTRFGI (266 aa)) are amidoligase domain. Residue S14 coordinates CTP. Residue S14 coordinates UTP. Residues 15 to 20 (SLGKGI) and D72 contribute to the ATP site. D72 and E140 together coordinate Mg(2+). Residues 147–149 (DIE), 187–192 (KTKPTQ), and K223 contribute to the CTP site. UTP is bound by residues 187–192 (KTKPTQ) and K223. Position 239-241 (239-241 (KDV)) interacts with ATP. The 252-residue stretch at 291-542 (TIGMVGKYIE…VKAAGQYSRG (252 aa)) folds into the Glutamine amidotransferase type-1 domain. Residue G352 participates in L-glutamine binding. C379 acts as the Nucleophile; for glutamine hydrolysis in catalysis. Residues 380–383 (LGMQ), E403, and R470 contribute to the L-glutamine site. Active-site residues include H515 and E517.

Belongs to the CTP synthase family. In terms of assembly, homotetramer.

The enzyme catalyses UTP + L-glutamine + ATP + H2O = CTP + L-glutamate + ADP + phosphate + 2 H(+). It carries out the reaction L-glutamine + H2O = L-glutamate + NH4(+). It catalyses the reaction UTP + NH4(+) + ATP = CTP + ADP + phosphate + 2 H(+). It functions in the pathway pyrimidine metabolism; CTP biosynthesis via de novo pathway; CTP from UDP: step 2/2. With respect to regulation, allosterically activated by GTP, when glutamine is the substrate; GTP has no effect on the reaction when ammonia is the substrate. The allosteric effector GTP functions by stabilizing the protein conformation that binds the tetrahedral intermediate(s) formed during glutamine hydrolysis. Inhibited by the product CTP, via allosteric rather than competitive inhibition. Functionally, catalyzes the ATP-dependent amination of UTP to CTP with either L-glutamine or ammonia as the source of nitrogen. Regulates intracellular CTP levels through interactions with the four ribonucleotide triphosphates. The sequence is that of CTP synthase from Vibrio parahaemolyticus serotype O3:K6 (strain RIMD 2210633).